Reading from the N-terminus, the 1207-residue chain is DNA-directed RNA polymerase subunit beta' (1207 aa).

Cys-60, Cys-62, Cys-75, and Cys-78 together coordinate Zn(2+). Asp-450, Asp-452, and Asp-454 together coordinate Mg(2+). Residues Cys-818, Cys-892, Cys-899, and Cys-902 each contribute to the Zn(2+) site.

It belongs to the RNA polymerase beta' chain family. As to quaternary structure, the RNAP catalytic core consists of 2 alpha, 1 beta, 1 beta' and 1 omega subunit. When a sigma factor is associated with the core the holoenzyme is formed, which can initiate transcription. Requires Mg(2+) as cofactor. The cofactor is Zn(2+).

It catalyses the reaction RNA(n) + a ribonucleoside 5'-triphosphate = RNA(n+1) + diphosphate. Its function is as follows. DNA-dependent RNA polymerase catalyzes the transcription of DNA into RNA using the four ribonucleoside triphosphates as substrates. This is DNA-directed RNA polymerase subunit beta' from Lactococcus lactis subsp. lactis (strain IL1403) (Streptococcus lactis).